Reading from the N-terminus, the 443-residue chain is MDEDSEVTQPQDQSCWATLPDVCLRRVFWWLGDRDRSRAALVCRKWNQIMYSADLWRYRTITFSGRPSRVHASEFESALWYVKKFGRYLEHLEIKFLNPYNAVLTKKFQVTMRGLLSCLGKSNNRLRSLSIQHLELDRLVWRNSIRGSLIKSLSFFLKKMGKHLDHLSLKGARLTVEQGCHILNSLSYMRNENVASELNIEDFFSHHLAVYGSSQFNKAMATFHNLTFLTLNYNCISDELLETLSENNAGTLRTMNIKCHVHDPHGQVVWGMSWAKLARQASNLKVNFFFERVMKYERLARILLQEIPVRSISLRSCYFSDPDWSMRPTLTDLLPTFRNTLQKLTFEFNNNHESLDEQLHLLILACRKLFYFKIWAFLDVKFVERILKSQEEGQCSLRTLKVRIYTNRYETNEEDRTLREIYRKYRKLIDSELNYFVIAYPMM.

The F-box domain maps to 13–59 (QSCWATLPDVCLRRVFWWLGDRDRSRAALVCRKWNQIMYSADLWRYR).

In terms of assembly, directly interacts with SKP1 and CUL1.

Functionally, substrate-recognition component of the SCF (SKP1-CUL1-F-box protein)-type E3 ubiquitin ligase complex. This Rattus norvegicus (Rat) protein is F-box only protein 39 (Fbxo39).